We begin with the raw amino-acid sequence, 494 residues long: Protein transport protein Sec61 subunit alpha (494 aa).

10 helical membrane passes run 36 to 56 (LWTS…LYGI), 79 to 99 (LMEL…LLAG), 122 to 142 (LLGI…GMYG), 147 to 167 (LGAG…IIVI), 177 to 197 (YGIG…SIVW), 249 to 269 (LLAT…QVEL), 294 to 314 (MPII…QILY), 359 to 379 (IVSD…SCAL), 426 to 446 (AAFG…MGAI), and 450 to 470 (TGIL…LLAV).

This sequence belongs to the SecY/SEC61-alpha family. In terms of assembly, heterotrimeric complex composed of SEC61-alpha, SEC61-beta and SEC61-gamma.

The protein localises to the endoplasmic reticulum membrane. Functionally, appears to play a crucial role in the insertion of secretory and membrane polypeptides into the ER. It is required for assembly of membrane and secretory proteins. This chain is Protein transport protein Sec61 subunit alpha, found in Pyrenomonas salina.